Reading from the N-terminus, the 550-residue chain is Copine-F (550 aa).

2 C2 domains span residues 1–115 and 123–246; these read MAET…RLIG and ITGK…PIIN. The region spanning 296-521 is the VWFA domain; sequence DLMVAIDCTE…DFQNEILRKL (226 aa).

Belongs to the copine family.

This Dictyostelium discoideum (Social amoeba) protein is Copine-F (cpnF).